Here is a 211-residue protein sequence, read N- to C-terminus: Probable nicotinate-nucleotide adenylyltransferase (211 aa).

This sequence belongs to the NadD family.

It catalyses the reaction nicotinate beta-D-ribonucleotide + ATP + H(+) = deamido-NAD(+) + diphosphate. Its pathway is cofactor biosynthesis; NAD(+) biosynthesis; deamido-NAD(+) from nicotinate D-ribonucleotide: step 1/1. Its function is as follows. Catalyzes the reversible adenylation of nicotinate mononucleotide (NaMN) to nicotinic acid adenine dinucleotide (NaAD). In Desulfotalea psychrophila (strain LSv54 / DSM 12343), this protein is Probable nicotinate-nucleotide adenylyltransferase.